The primary structure comprises 508 residues: Replication factor C large subunit (508 aa).

43 to 50 contacts ATP; it reads GSPGIGKT. The segment at 425-508 is disordered; that stretch reads AVEHSGGVFE…DQQSGLSDFM (84 aa). 2 stretches are compositionally biased toward acidic residues: residues 443-461 and 483-500; these read GDSD…EESG and TTDD…DDDQ.

The protein belongs to the activator 1 small subunits family. RfcL subfamily. In terms of assembly, heteromultimer composed of small subunits (RfcS) and large subunits (RfcL).

In terms of biological role, part of the RFC clamp loader complex which loads the PCNA sliding clamp onto DNA. This Haloarcula marismortui (strain ATCC 43049 / DSM 3752 / JCM 8966 / VKM B-1809) (Halobacterium marismortui) protein is Replication factor C large subunit.